The following is a 146-amino-acid chain: Envelope protein OPG155 (146 aa).

The chain crosses the membrane as a helical; Signal-anchor for type II membrane protein span at residues 1 to 21; the sequence is MNSLSIFFIVVATAAVCLLFI. The Virion surface portion of the chain corresponds to 22–146; it reads QGYSIYENYG…AECQFLKSVL (125 aa).

The protein belongs to the orthopoxvirus OPG155 protein family. Part of a stable entry-fusion complex (EFC) which is at least composed of proteins OPG143, OPG147, OPG155, OPG086, OPG094, OPG107, OPG104, and OPG099. Formation of the viral membrane is necessary for the assembly of the complex. Interacts directly with protein OPG107. Post-translationally, contains two intramolecular disulfide bonds. They are created by the viral disulfide bond formation pathway, a poxvirus-specific pathway that operates on the cytoplasmic side of the MV membranes.

The protein resides in the virion membrane. Its function is as follows. Envelope protein required for virus entry into host cell and for cell-cell fusion (syncytium formation). This is Envelope protein OPG155 (OPG155) from Ectromelia virus (strain Moscow) (ECTV).